The primary structure comprises 352 residues: C-C chemokine receptor type 5 (352 aa).

Residues 1-30 are Extracellular-facing; the sequence is MDYQVSSPTYDIDYYTSGPCQKINVKQIAA. Residue Tyr3 is modified to Sulfotyrosine. Residues Ser6 and Ser7 are each glycosylated (O-linked (GalNAc...) serine). 3 positions are modified to sulfotyrosine: Tyr10, Tyr14, and Tyr15. Disulfide bonds link Cys20/Cys269 and Cys101/Cys178. Residues 31 to 58 traverse the membrane as a helical segment; the sequence is RLLPPLYSLVFIFGFVGNMLVILILINC. Topologically, residues 59–68 are cytoplasmic; that stretch reads KRLKSMTDIY. The helical transmembrane segment at 69 to 89 threads the bilayer; sequence LLNLAISDLFFLLTVPFWAHY. The Extracellular portion of the chain corresponds to 90–102; that stretch reads AAAQWDFGNTMCQ. A helical membrane pass occupies residues 103–124; sequence LLTGLYFIGFFSGIFFIILLTI. Topologically, residues 125–141 are cytoplasmic; that stretch reads DRYLAIVHAVFALKART. Residues 142–166 form a helical membrane-spanning segment; that stretch reads VTFGVVTSVITWVVAVFASLPGIIF. Residues 167 to 198 are Extracellular-facing; the sequence is TRSQKEGLHYTCSSHFPYSQYQFWKNFQTLKI. A helical transmembrane segment spans residues 199–218; sequence VILGLVLPLLVMVICYSGIL. Topologically, residues 219-235 are cytoplasmic; that stretch reads KTLLRCRNEKKRHRAVR. The chain crosses the membrane as a helical span at residues 236-260; that stretch reads LIFTIMIVYFLFWAPYNIVLLLNTF. At 261-277 the chain is on the extracellular side; that stretch reads QEFFGLNNCSSSNRLDQ. A helical membrane pass occupies residues 278–301; that stretch reads AMQVTETLGMTHCCINPIIYAFVG. Residues 302–352 are Cytoplasmic-facing; it reads EKFRNYLLVFFQKHIAKHFCKCCSIFQQEAPERASSVYTRSTGEQEISVGL. S-palmitoyl cysteine attachment occurs at residues Cys321, Cys323, and Cys324. 4 positions are modified to phosphoserine; by BARK1: Ser336, Ser337, Ser342, and Ser349.

This sequence belongs to the G-protein coupled receptor 1 family. Interacts with PRAF2. Efficient ligand binding to CCL3/MIP-1alpha and CCL4/MIP-1beta requires sulfation, O-glycosylation and sialic acid modifications. Glycosylation on Ser-6 is required for efficient binding of CCL4. Interacts with GRK2. Interacts with ARRB1 and ARRB2. Interacts with CNIH4. Interacts with S100A4; this interaction stimulates T-lymphocyte chemotaxis. Sulfated on at least 2 of the N-terminal tyrosines. Sulfation is required for efficient binding of the chemokines, CCL3 and CCL4. Post-translationally, palmitoylation in the C-terminal is important for cell surface expression. In terms of processing, phosphorylation on serine residues in the C-terminal is stimulated by binding CC chemokines especially by APO-RANTES. O-glycosylated, but not N-glycosylated. Ser-6 appears to be the major site even if Ser-7 may be also O-glycosylated. Also sialylated glycans present which contribute to chemokine binding. Thr-16 and Ser-17 may also be glycosylated and, if so, with small moieties such as a T-antigen.

The protein localises to the cell membrane. Its function is as follows. Receptor for a number of inflammatory CC-chemokines including CCL3/MIP-1-alpha, CCL4/MIP-1-beta and RANTES and subsequently transduces a signal by increasing the intracellular calcium ion level. May play a role in the control of granulocytic lineage proliferation or differentiation. Participates in T-lymphocyte migration to the infection site by acting as a chemotactic receptor. The chain is C-C chemokine receptor type 5 (CCR5) from Hylobates moloch (Silvery gibbon).